Here is a 506-residue protein sequence, read N- to C-terminus: Sucrose transport protein SUT3 (506 aa).

Topologically, residues 1–20 (MAVDMELDGGGDGKGKAPPQ) are cytoplasmic. A helical transmembrane segment spans residues 21–41 (ISLSGLFLACMVAGGVQYGWA). Residues 42–54 (LQLSLLTPYIQTL) are Extracellular-facing. A helical membrane pass occupies residues 55–75 (GIPHALTSVMWLCGPIAGLIV). Residues 76 to 94 (QPCVGLYSDKCTSSLGRRR) lie on the Cytoplasmic side of the membrane. Residues 95–115 (PFILTGCIIICISVIVIGFSS) traverse the membrane as a helical segment. The Extracellular segment spans residues 116-135 (DIGYALGDATEDCKVYRGPR). The helical transmembrane segment at 136–156 (YHAAAAFILGFWLLDFSNNTV) threads the bilayer. Topologically, residues 157-171 (QGPARALMADLSGRH) are cytoplasmic. A helical membrane pass occupies residues 172 to 192 (GPSAANAIFCSWMALGNILGY). At 193 to 220 (SSGSTNDWHKWFPFLMTRACCEACANLK) the chain is on the extracellular side. The chain crosses the membrane as a helical span at residues 221-241 (AAFLVAVVFLGLSTAVTMVFA). Residues 242–275 (REVALDPVAAAKRNEGEASGPLAVFKGMKNLPVG) are Cytoplasmic-facing. Residues 276 to 296 (MPSVLIVTGLTWLSWFPFILF) form a helical membrane-spanning segment. At 297-327 (DTDWMGREIYHGRPDGSPAEVTAFQEGVRQG) the chain is on the extracellular side. Residues 328–348 (AFGLLLNSIVLGISSFLIEPM) traverse the membrane as a helical segment. The Cytoplasmic segment spans residues 349-355 (CRRLGAR). A helical transmembrane segment spans residues 356–376 (AVWVMSSAVVCVAMAAVSVLS). The Extracellular segment spans residues 377–404 (AWSLGDFGGSVQDAARAPAEEGGVRASA). Residues 405–425 (LALFVFLGLPFAVLCSVPFAV) form a helical membrane-spanning segment. The Cytoplasmic segment spans residues 426-441 (TAQLTASRGGGQGLCT). Residues 442–462 (GVLNISIVVPQMAIALGAGPW) form a helical membrane-spanning segment. Residues 463 to 470 (DELFGEGN) are Extracellular-facing. The chain crosses the membrane as a helical span at residues 471–491 (IPAFAMASVFAAAAAAAGVVL). The Cytoplasmic segment spans residues 492–506 (LPKVSVRSVSMAGGH).

It belongs to the glycoside-pentoside-hexuronide (GPH) cation symporter transporter (TC 2.A.2.4) family. Homodimer.

The protein localises to the cell membrane. The protein operates within glycan biosynthesis; sucrose metabolism. In terms of biological role, responsible for the transport of sucrose into the cell, with the concomitant uptake of protons (symport system). May also transport other glucosides. In Oryza sativa subsp. indica (Rice), this protein is Sucrose transport protein SUT3 (SUT3).